A 142-amino-acid chain; its full sequence is Large ribosomal subunit protein uL13 (142 aa).

The protein belongs to the universal ribosomal protein uL13 family. As to quaternary structure, part of the 50S ribosomal subunit.

This protein is one of the early assembly proteins of the 50S ribosomal subunit, although it is not seen to bind rRNA by itself. It is important during the early stages of 50S assembly. This is Large ribosomal subunit protein uL13 from Xanthomonas oryzae pv. oryzae (strain MAFF 311018).